A 138-amino-acid chain; its full sequence is MSITVRVITPDRIVWDNVAEEVILPSSTGQLGILSGHAPLLTALNIGVMRIRPGKDWENIAVLGGFAEVENNEIKVLVNGAELGSKIDKEKARAEYERAQTRLDEVSKGDDRRKTIQAQQSWRKARARYQAAGGLVSV.

This sequence belongs to the ATPase epsilon chain family. F-type ATPases have 2 components, CF(1) - the catalytic core - and CF(0) - the membrane proton channel. CF(1) has five subunits: alpha(3), beta(3), gamma(1), delta(1), epsilon(1). CF(0) has three main subunits: a, b and c.

It is found in the cellular thylakoid membrane. Functionally, produces ATP from ADP in the presence of a proton gradient across the membrane. In Microcystis aeruginosa (strain NIES-843 / IAM M-2473), this protein is ATP synthase epsilon chain.